Reading from the N-terminus, the 181-residue chain is MEARRHSALKDSIRSIPDYPKPGIIFRDITTLLSDPRSFRRAVDSLVHPYAGGRIDQVAGIEARGFILGGAVAHQLSSGFVPIRKKGKLPHKTVSTAYALEYGTDEIEIHVDAIKPGDRVILVDDLIATGGTATAAVNLLRQLGAEVIAACFVIDLPEIGGAQRLRDLGVTVRTLMEFEGH.

It belongs to the purine/pyrimidine phosphoribosyltransferase family. In terms of assembly, homodimer.

Its subcellular location is the cytoplasm. It carries out the reaction AMP + diphosphate = 5-phospho-alpha-D-ribose 1-diphosphate + adenine. The protein operates within purine metabolism; AMP biosynthesis via salvage pathway; AMP from adenine: step 1/1. Its function is as follows. Catalyzes a salvage reaction resulting in the formation of AMP, that is energically less costly than de novo synthesis. This is Adenine phosphoribosyltransferase from Methylorubrum populi (strain ATCC BAA-705 / NCIMB 13946 / BJ001) (Methylobacterium populi).